The following is a 717-amino-acid chain: ATP-dependent zinc metalloprotease FtsH (717 aa).

Residues 1-7 (MFKDKKM) are Cytoplasmic-facing. Residues 8–28 (LKYIVIYSIIAFGILLTFNMV) form a helical membrane-spanning segment. The Extracellular segment spans residues 29 to 109 (KDEMLYEKVD…VEFNVTKPEN (81 aa)). Residues 110–130 (YQLLGLLMSWVFPLILIFFVG) traverse the membrane as a helical segment. Topologically, residues 131–717 (RMMFSKMNNK…SSTNNKVDGE (587 aa)) are cytoplasmic. 206–213 (GPPGTGKT) lines the ATP pocket. Residue histidine 427 participates in Zn(2+) binding. The active site involves glutamate 428. Residues histidine 431 and aspartate 504 each contribute to the Zn(2+) site. Residues 670–717 (KLARANNEANNDALDSSKENEEVKSNVNDGATEEKKDDSSTNNKVDGE) are disordered. 2 stretches are compositionally biased toward basic and acidic residues: residues 684–693 (DSSKENEEVK) and 701–717 (TEEKKDDSSTNNKVDGE).

This sequence in the central section; belongs to the AAA ATPase family. The protein in the C-terminal section; belongs to the peptidase M41 family. As to quaternary structure, homohexamer. Zn(2+) serves as cofactor.

It is found in the cell membrane. Acts as a processive, ATP-dependent zinc metallopeptidase for both cytoplasmic and membrane proteins. Plays a role in the quality control of integral membrane proteins. This chain is ATP-dependent zinc metalloprotease FtsH, found in Clostridium perfringens (strain ATCC 13124 / DSM 756 / JCM 1290 / NCIMB 6125 / NCTC 8237 / Type A).